Here is a 509-residue protein sequence, read N- to C-terminus: MDIRAAEITAILKEQIQNFGQEAEVSEVGQVLSVGDGIARVYGLDNVQAGEMVEFENGTRGMALNLEIDNVGIVIFGSDREIKEGQTVKRTRAIVDAPVGKGLLGRVVDALGNPIDGKGPIVYTERRRVDVKAPGIIPRKSVHEPMQTGLKAIDALIPIGRGQRELIIGDRQTGKTAVALDSILNQKPINQGTDEKAKLYCVYVAVGQKRSTVAQFVKVLEEQGALEYSIVVAATASDAAPMQFLAPFTGTAMGEYFRDNGMHALIIHDDLSKQAVAYRQMSLLLRRPPGREAYPGDVFYLHSRLLERAAKLNDSLGAGSLTALPVIETQANDVSAYIPTNVISITDGQIFLESDLFYQGIRPAVNVGLSVSRVGSSAQIKAMKQVAGKIKGELAQYRELAAFAQFGSDLDASTQKLLNRGARLTELLKQSQFSPLKVEEQVAVIFAGTNGYLDPLPVSKVREFEQGLLLALRSQHPEILEAIRSSKEISKDTTEKLTKALDAFAKSFA.

Position 169-176 (169-176 (GDRQTGKT)) interacts with ATP.

This sequence belongs to the ATPase alpha/beta chains family. In terms of assembly, F-type ATPases have 2 components, CF(1) - the catalytic core - and CF(0) - the membrane proton channel. CF(1) has five subunits: alpha(3), beta(3), gamma(1), delta(1), epsilon(1). CF(0) has three main subunits: a(1), b(2) and c(9-12). The alpha and beta chains form an alternating ring which encloses part of the gamma chain. CF(1) is attached to CF(0) by a central stalk formed by the gamma and epsilon chains, while a peripheral stalk is formed by the delta and b chains.

The protein resides in the cell inner membrane. It carries out the reaction ATP + H2O + 4 H(+)(in) = ADP + phosphate + 5 H(+)(out). In terms of biological role, produces ATP from ADP in the presence of a proton gradient across the membrane. The alpha chain is a regulatory subunit. The polypeptide is ATP synthase subunit alpha (Xanthobacter autotrophicus (strain ATCC BAA-1158 / Py2)).